Reading from the N-terminus, the 101-residue chain is TrfB transcriptional repressor protein (101 aa).

The segment at residues 37–56 is a DNA-binding region (H-T-H motif); the sequence is QATFATSLGLTRGAVSQAVH.

Its function is as follows. In conjunction with KorB, inhibits the transcription of kilA, trfA and korAB operons. In conjunction with KorC is responsible for the negative control of kilC and kilE operons. In Escherichia coli, this protein is TrfB transcriptional repressor protein (trfB).